The following is a 223-amino-acid chain: Sigma non-opioid intracellular receptor 1 (223 aa).

Over 1–9 the chain is Lumenal; sequence MPWAAGRRW. The interval 2–8 is targeting to endoplasmic reticulum-associated lipid droplets; sequence PWAAGRR. The helical transmembrane segment at 10 to 30 threads the bilayer; sequence AWITLILTIIAVLIQAAWLWL. The Cytoplasmic portion of the chain corresponds to 31 to 223; sequence GTQNFVFSRE…LTTYLFGQDS (193 aa). The important for ligand-binding stretch occupies residues 99 to 106; sequence SLSEYVLL. The C-terminal hydrophobic region stretch occupies residues 177–223; sequence VIPSTLFFALADTFFSTQDYLTLFYTLRAYARGLRLELTTYLFGQDS.

It belongs to the ERG2 family. Homotrimer. Interacts with KCNA4. Interacts with KCNA2; cocaine consumption leads to increased interaction. Forms a ternary complex with ANK2 and ITPR3. The complex is disrupted by agonists. Interacts with RNF112 in an oxidative stress-regulated manner. In terms of tissue distribution, widely expressed with higher expression in liver, brain, kidney and thymus. Expressed throughout the brain with higher expression within cerebral cortex, hippocampus and cerebellum. Within the hippocampus expressed in cornu ammonis pyramidal neurons, the granular cells of the dentate gyrus as well as interneurons. Within the cerebellum, expressed in Purkinje cell bodies. Highly expressed in the brainstem and motor neurons of the spinal cord. Expressed by neural retina, retinal pigment epithelial cells and lens.

It localises to the nucleus inner membrane. The protein localises to the nucleus outer membrane. The protein resides in the nucleus envelope. It is found in the cytoplasmic vesicle. Its subcellular location is the endoplasmic reticulum membrane. It localises to the membrane. The protein localises to the lipid droplet. The protein resides in the cell junction. It is found in the cell membrane. Its subcellular location is the cell projection. It localises to the growth cone. The protein localises to the postsynaptic density membrane. In terms of biological role, functions in lipid transport from the endoplasmic reticulum and is involved in a wide array of cellular functions probably through regulation of the biogenesis of lipid microdomains at the plasma membrane. Involved in the regulation of different receptors it plays a role in BDNF signaling and EGF signaling. Also regulates ion channels like the potassium channel and could modulate neurotransmitter release. Plays a role in calcium signaling through modulation together with ANK2 of the ITP3R-dependent calcium efflux at the endoplasmic reticulum. Plays a role in several other cell functions including proliferation, survival and death. Originally identified for its ability to bind various psychoactive drugs it is involved in learning processes, memory and mood alteration. Necessary for proper mitochondrial axonal transport in motor neurons, in particular the retrograde movement of mitochondria. Plays a role in protecting cells against oxidative stress-induced cell death via its interaction with RNF112. The sequence is that of Sigma non-opioid intracellular receptor 1 (Sigmar1) from Mus musculus (Mouse).